We begin with the raw amino-acid sequence, 387 residues long: 1-deoxy-D-xylulose 5-phosphate reductoisomerase (387 aa).

Residues threonine 10, glycine 11, serine 12, valine 13, asparagine 38, and asparagine 119 each contribute to the NADPH site. 1-deoxy-D-xylulose 5-phosphate is bound at residue lysine 120. Residue glutamate 121 coordinates NADPH. Aspartate 145 serves as a coordination point for Mn(2+). Residues serine 146, glutamate 147, serine 170, and histidine 193 each contribute to the 1-deoxy-D-xylulose 5-phosphate site. Glutamate 147 serves as a coordination point for Mn(2+). Position 199 (glycine 199) interacts with NADPH. 1-deoxy-D-xylulose 5-phosphate contacts are provided by serine 206, asparagine 211, lysine 212, and glutamate 215. Residue glutamate 215 coordinates Mn(2+).

It belongs to the DXR family. Requires Mg(2+) as cofactor. It depends on Mn(2+) as a cofactor.

It catalyses the reaction 2-C-methyl-D-erythritol 4-phosphate + NADP(+) = 1-deoxy-D-xylulose 5-phosphate + NADPH + H(+). Its pathway is isoprenoid biosynthesis; isopentenyl diphosphate biosynthesis via DXP pathway; isopentenyl diphosphate from 1-deoxy-D-xylulose 5-phosphate: step 1/6. Its function is as follows. Catalyzes the NADPH-dependent rearrangement and reduction of 1-deoxy-D-xylulose-5-phosphate (DXP) to 2-C-methyl-D-erythritol 4-phosphate (MEP). The chain is 1-deoxy-D-xylulose 5-phosphate reductoisomerase from Wolbachia sp. subsp. Drosophila simulans (strain wRi).